A 369-amino-acid chain; its full sequence is Extracellular signal-regulated kinase 2 (369 aa).

The region spanning 14–304 (YEVLQKIGKG…AEEALAHPFV (291 aa)) is the Protein kinase domain. Residues 20–28 (IGKGAYGIV) and Lys43 each bind ATP. Asp137 serves as the catalytic Proton acceptor. Thr176 bears the Phosphothreonine mark. Positions 176-178 (TEY) match the TXY motif. At Tyr178 the chain carries Phosphotyrosine. The interval 346–369 (KKKEERKKQTNPTKPDTTAPTLST) is disordered. The span at 355 to 369 (TNPTKPDTTAPTLST) shows a compositional bias: polar residues.

This sequence belongs to the protein kinase superfamily. CMGC Ser/Thr protein kinase family. MAP kinase subfamily. Mg(2+) serves as cofactor. Dually phosphorylated on Thr-176 and Tyr-178, which activates the enzyme.

The catalysed reaction is L-seryl-[protein] + ATP = O-phospho-L-seryl-[protein] + ADP + H(+). It carries out the reaction L-threonyl-[protein] + ATP = O-phospho-L-threonyl-[protein] + ADP + H(+). Activated by tyrosine and threonine phosphorylation. Functionally, implicated in the relay of the cAMP chemotactic signal and cell differentiation. Important for receptor-mediated activation of adenylyl cyclase. This Dictyostelium discoideum (Social amoeba) protein is Extracellular signal-regulated kinase 2 (erkB).